Here is a 513-residue protein sequence, read N- to C-terminus: NAD(P)H-quinone oxidoreductase subunit 2 (513 aa).

The next 14 helical transmembrane spans lie at 15 to 35 (VIWP…GDLI), 43 to 63 (WLPY…YFTW), 80 to 100 (LSIV…LMSI), 110 to 130 (LAEF…LSGA), 133 to 153 (LVMI…MTGY), 168 to 188 (LLIG…LYGL), 211 to 231 (LALA…ISAV), 245 to 265 (PTPV…ALAI), 281 to 301 (FIFI…ALAQ), 307 to 327 (MLAY…TAGT), 335 to 355 (IFYL…VILF), 379 to 399 (LCLS…GFFG), 401 to 421 (IYLF…VGLV), and 467 to 487 (VGIV…NPLF).

Belongs to the complex I subunit 2 family. As to quaternary structure, NDH-1 can be composed of about 15 different subunits; different subcomplexes with different compositions have been identified which probably have different functions.

The protein localises to the cellular thylakoid membrane. The catalysed reaction is a plastoquinone + NADH + (n+1) H(+)(in) = a plastoquinol + NAD(+) + n H(+)(out). It carries out the reaction a plastoquinone + NADPH + (n+1) H(+)(in) = a plastoquinol + NADP(+) + n H(+)(out). NDH-1 shuttles electrons from an unknown electron donor, via FMN and iron-sulfur (Fe-S) centers, to quinones in the respiratory and/or the photosynthetic chain. The immediate electron acceptor for the enzyme in this species is believed to be plastoquinone. Couples the redox reaction to proton translocation, and thus conserves the redox energy in a proton gradient. Cyanobacterial NDH-1 also plays a role in inorganic carbon-concentration. This chain is NAD(P)H-quinone oxidoreductase subunit 2, found in Microcystis aeruginosa (strain NIES-843 / IAM M-2473).